We begin with the raw amino-acid sequence, 463 residues long: 23S rRNA (uracil(1939)-C(5))-methyltransferase RlmD (463 aa).

Positions 6–76 constitute a TRAM domain; the sequence is KSRKPQQPEY…KRLEEAEMVA (71 aa). [4Fe-4S] cluster contacts are provided by cysteine 90, cysteine 96, cysteine 99, and cysteine 178. Positions 288, 317, 322, 341, 368, and 389 each coordinate S-adenosyl-L-methionine. Residue cysteine 415 is the Nucleophile of the active site.

Belongs to the class I-like SAM-binding methyltransferase superfamily. RNA M5U methyltransferase family. RlmD subfamily.

It catalyses the reaction uridine(1939) in 23S rRNA + S-adenosyl-L-methionine = 5-methyluridine(1939) in 23S rRNA + S-adenosyl-L-homocysteine + H(+). Functionally, catalyzes the formation of 5-methyl-uridine at position 1939 (m5U1939) in 23S rRNA. This chain is 23S rRNA (uracil(1939)-C(5))-methyltransferase RlmD, found in Acinetobacter baumannii (strain SDF).